We begin with the raw amino-acid sequence, 258 residues long: MARPPVPGSVVVPNWHESAEGKEYLACILRKNRRRVFGLLERPVLLPPVSIDTASYKIFVSGKSGVGKTALVAKLAGLEVPVVHHETTGIQTTVVFWPAKLQASSRVVMFRFEFWDCGESALKKFDHMLLACMENTDAFLFLFSFTDRASFEDLPGQLARIAGEAPGVVRMVIGSKFDQYMHTDVPERDLTAFRQAWELPLLRVKSVPGRRLADGRTLDGRAGLADVAHILNGLAEQLWHQDQVAAGLLPNPPESAPE.

The small GTPase-like stretch occupies residues 50–258; sequence SIDTASYKIF…LPNPPESAPE (209 aa). The GTP site is built by serine 64, glycine 65, glycine 67, lysine 68, threonine 69, alanine 70, valine 82, histidine 84, threonine 87, lysine 176, aspartate 178, and serine 206.

It belongs to the small GTPase superfamily. Rab family. In terms of assembly, interacts with FUZ. Associates with the CPLANE (ciliogenesis and planar polarity effectors) complex via its interaction with FUZ.

It is found in the cytoplasm. It localises to the cytoskeleton. The protein localises to the cilium basal body. The protein resides in the microtubule organizing center. Its subcellular location is the centrosome. It is found in the centriole. Functionally, required for efficient primary cilia initiation, regulating a late step in cilia initiation. Plays a role in the final maturation of the mother centriole and ciliary vesicle that allows extension of the ciliary axoneme. The chain is Ciliogenesis and planar polarity effector 2 from Homo sapiens (Human).